The primary structure comprises 440 residues: Putative purine permease YwdJ (440 aa).

A run of 13 helical transmembrane segments spans residues 3–23 (LVLGALQWTAFIIAAAIVVPV), 39–59 (LIQSTFFVLGIAAVIQCLKGH), 67–87 (PAGLWWGVYTIYAGLTGTVFA), 96–116 (LQGALLVSAVCFFLLSVFKVI), 130–150 (VYLLLLVMQLSQPIIKGILGI), 156–176 (GVDGLVFGLALVVIAAAFIMT), 188–208 (ILLALFGGWVLFAAAGAAKPI), 231–251 (GLIITSIFITILLIVNMLASM), 283–303 (LLSGLTGAIAPVPISGAAGFI), 314–334 (FMLGSILVIVISVIPFFMNTF), 341–361 (VGFAVNFVVFSAMGGLAFAEF), 374–394 (SIIGISLLTGVGIMFVPETAL), and 399–419 (PVFISLLSNGLVLGTLAAIAA).

The protein belongs to the nucleobase:cation symporter-2 (NCS2) (TC 2.A.40) family.

It is found in the cell membrane. In Bacillus subtilis (strain 168), this protein is Putative purine permease YwdJ (ywdJ).